The sequence spans 906 residues: Protein translocase subunit SecA (906 aa).

ATP contacts are provided by residues Q89, 107–111 (GEGKT), and D502. The segment at 868 to 887 (VPPAQRDPADPRTWGKVSRN) is disordered. Zn(2+) contacts are provided by C890, C892, C901, and H902.

Belongs to the SecA family. As to quaternary structure, monomer and homodimer. Part of the essential Sec protein translocation apparatus which comprises SecA, SecYEG and auxiliary proteins SecDF-YajC and YidC. It depends on Zn(2+) as a cofactor.

The protein resides in the cell inner membrane. It localises to the cytoplasm. It carries out the reaction ATP + H2O + cellular proteinSide 1 = ADP + phosphate + cellular proteinSide 2.. In terms of biological role, part of the Sec protein translocase complex. Interacts with the SecYEG preprotein conducting channel. Has a central role in coupling the hydrolysis of ATP to the transfer of proteins into and across the cell membrane, serving both as a receptor for the preprotein-SecB complex and as an ATP-driven molecular motor driving the stepwise translocation of polypeptide chains across the membrane. This is Protein translocase subunit SecA from Brucella abortus (strain S19).